A 426-amino-acid chain; its full sequence is 3-phosphoshikimate 1-carboxyvinyltransferase (426 aa).

The 3-phosphoshikimate site is built by Lys-22, Ser-23, and Arg-27. Phosphoenolpyruvate is bound at residue Lys-22. Phosphoenolpyruvate is bound by residues Gly-96 and Arg-124. Residues Ser-170, Ser-171, Gln-172, Ser-198, Asp-314, Asn-337, and Lys-341 each coordinate 3-phosphoshikimate. Gln-172 provides a ligand contact to phosphoenolpyruvate. Catalysis depends on Asp-314, which acts as the Proton acceptor. Phosphoenolpyruvate contacts are provided by Arg-345, Arg-387, and Lys-412.

The protein belongs to the EPSP synthase family. As to quaternary structure, monomer.

It localises to the cytoplasm. It catalyses the reaction 3-phosphoshikimate + phosphoenolpyruvate = 5-O-(1-carboxyvinyl)-3-phosphoshikimate + phosphate. Its pathway is metabolic intermediate biosynthesis; chorismate biosynthesis; chorismate from D-erythrose 4-phosphate and phosphoenolpyruvate: step 6/7. In terms of biological role, catalyzes the transfer of the enolpyruvyl moiety of phosphoenolpyruvate (PEP) to the 5-hydroxyl of shikimate-3-phosphate (S3P) to produce enolpyruvyl shikimate-3-phosphate and inorganic phosphate. The polypeptide is 3-phosphoshikimate 1-carboxyvinyltransferase (Vibrio campbellii (strain ATCC BAA-1116)).